A 176-amino-acid chain; its full sequence is Peptidoglycan-associated lipoprotein (176 aa).

The signal sequence occupies residues 1–21 (MKAGSFYKLGLLVASAVLVAA). Cysteine 22 is lipidated: N-palmitoyl cysteine. Cysteine 22 carries the S-diacylglycerol cysteine lipid modification. The OmpA-like domain maps to 60–176 (YTTQAPHNQL…RVEFIYEATR (117 aa)).

Belongs to the Pal lipoprotein family. As to quaternary structure, the Tol-Pal system is composed of five core proteins: the inner membrane proteins TolA, TolQ and TolR, the periplasmic protein TolB and the outer membrane protein Pal. They form a network linking the inner and outer membranes and the peptidoglycan layer.

Its subcellular location is the cell outer membrane. Part of the Tol-Pal system, which plays a role in outer membrane invagination during cell division and is important for maintaining outer membrane integrity. Very strongly associated with the peptidoglycan. This chain is Peptidoglycan-associated lipoprotein, found in Legionella pneumophila.